A 64-amino-acid polypeptide reads, in one-letter code: Large ribosomal subunit protein bL35 (64 aa).

Over residues 1–26 (MPKMKSHRGASKRFKRTASGKLKRSH) the composition is skewed to basic residues. A disordered region spans residues 1-42 (MPKMKSHRGASKRFKRTASGKLKRSHAYTSHLFANKSTKAKR).

Belongs to the bacterial ribosomal protein bL35 family.

The polypeptide is Large ribosomal subunit protein bL35 (Exiguobacterium sp. (strain ATCC BAA-1283 / AT1b)).